We begin with the raw amino-acid sequence, 323 residues long: Serpentine receptor class gamma-5 (323 aa).

A run of 7 helical transmembrane segments spans residues 31-51 (QLFY…IMLF), 63-83 (FIIF…DLFI), 98-117 (YPLF…IYNY), 151-171 (IPVT…NVII), 193-213 (WASL…ITVF), 245-265 (AAFF…ITAA), and 272-292 (FLQG…MVLI).

The protein belongs to the nematode receptor-like protein srg family.

It is found in the membrane. The chain is Serpentine receptor class gamma-5 (srg-5) from Caenorhabditis elegans.